A 316-amino-acid chain; its full sequence is Transaldolase (316 aa).

Catalysis depends on Lys125, which acts as the Schiff-base intermediate with substrate.

This sequence belongs to the transaldolase family. Type 1 subfamily. In terms of assembly, homodimer.

It is found in the cytoplasm. It carries out the reaction D-sedoheptulose 7-phosphate + D-glyceraldehyde 3-phosphate = D-erythrose 4-phosphate + beta-D-fructose 6-phosphate. It participates in carbohydrate degradation; pentose phosphate pathway; D-glyceraldehyde 3-phosphate and beta-D-fructose 6-phosphate from D-ribose 5-phosphate and D-xylulose 5-phosphate (non-oxidative stage): step 2/3. In terms of biological role, transaldolase is important for the balance of metabolites in the pentose-phosphate pathway. In Verminephrobacter eiseniae (strain EF01-2), this protein is Transaldolase.